An 871-amino-acid polypeptide reads, in one-letter code: MQPSNPNQFTEKAWAAIARTPDLAKQAQHQNLESEHLMKSLLEQEGLATQIFQKAGCSVQRIRDLTDEFISRQPKISHPSGVYLGQSLDKLLDRAEEARKQFGDEFISIEHLVLAFAQDDRFGKKLFQDIGLSEKVLREAIQQIRGSQKVTDQNPEGKYAALEKYGRDLTLLARQGKLDPVIGRDDEIRRVIQILSRRTKNNPVLIGEPGVGKTAIAEGLAQRIVARDVPDSLRDRQLIALDMGALIAGAKYRGEFEERLKAVLKEVTDSNGQIILFIDEIHTVVGAGATQGAMDAGNLLKPMLARGELRCIGATTLDEYRKYIEKDAALERRFQQVYVDQPSVEDTISILRGLKERYEIHHGVKISDTALVAAATLSARYISDRFLPDKAIDLVDEAAAKLKMEITSKPEELDEIDRKILQLEMERLSLQKETSAASRDRLEKLERELADLKEEQSRLNAQWQAEKEVIDRLQSIKEEIEKVNIEIQQAERNYDLNRAAELKYGKLTELHKKLAEAEAKLREIQVGGRSLLRDEVTEADIAEIISKWTGIPVSKLVESEAQKLLHLEEELHKRVVGQDEAVSAVAEAIQRSRAGLADPNRPIASFIFLGPTGVGKTELAKALAAFMFDTEEALVRIDMSEYMEKHAVSRLIGAPPGYVGYDEGGQLTEAIRRRPYAVVLFDEIEKAHPDVFNVFLQILDDGRVTDSQGRTVDFKNTIIIMTSNIGSQYILDVAGDDSRYSEMYNRVMEAMRAHFRPEFLNRVDEFIIFHSLRKDQLRQIVQLQVQRLQQRLSDRHITLSLTEKAIDFLAEVGYDPVYGARPLKRAIQKQLETPIAKAILRGDFFDGDTILVDVGEDERLSFRRQVELATV.

The region spanning 6-147 (PNQFTEKAWA…REAIQQIRGS (142 aa)) is the Clp R domain. 2 repeat regions span residues 9-73 (FTEK…ISRQ) and 84-147 (LGQS…IRGS). Residues 160–341 (AALEKYGRDL…RRFQQVYVDQ (182 aa)) are NBD1. ATP is bound at residue 207-214 (GEPGVGKT). The segment at 342–550 (PSVEDTISIL…IAEIISKWTG (209 aa)) is linker. A coiled-coil region spans residues 392 to 526 (IDLVDEAAAK…AEAKLREIQV (135 aa)). Residues 560-771 (EAQKLLHLEE…RVDEFIIFHS (212 aa)) are NBD2. Residue 610 to 617 (GPTGVGKT) participates in ATP binding. The tract at residues 772–871 (LRKDQLRQIV…FRRQVELATV (100 aa)) is C-terminal.

Belongs to the ClpA/ClpB family. As to quaternary structure, homohexamer. The oligomerization is ATP-dependent.

It localises to the cytoplasm. In terms of biological role, part of a stress-induced multi-chaperone system, it is involved in the recovery of the cell from heat-induced damage, in cooperation with DnaK, DnaJ and GrpE. Acts before DnaK, in the processing of protein aggregates. Protein binding stimulates the ATPase activity; ATP hydrolysis unfolds the denatured protein aggregates, which probably helps expose new hydrophobic binding sites on the surface of ClpB-bound aggregates, contributing to the solubilization and refolding of denatured protein aggregates by DnaK. This chain is Chaperone protein ClpB 1 (clpB1), found in Thermosynechococcus vestitus (strain NIES-2133 / IAM M-273 / BP-1).